Reading from the N-terminus, the 271-residue chain is Phosphate import ATP-binding protein PstB 2 (271 aa).

Residues 25–266 form the ABC transporter domain; the sequence is MATEDLHVYY…PQEKQTEDYI (242 aa). 57–64 is a binding site for ATP; that stretch reads GPSGCGKS.

Belongs to the ABC transporter superfamily. Phosphate importer (TC 3.A.1.7) family. The complex is composed of two ATP-binding proteins (PstB), two transmembrane proteins (PstC and PstA) and a solute-binding protein (PstS).

It is found in the cell membrane. The enzyme catalyses phosphate(out) + ATP + H2O = ADP + 2 phosphate(in) + H(+). Its function is as follows. Part of the ABC transporter complex PstSACB involved in phosphate import. Responsible for energy coupling to the transport system. The polypeptide is Phosphate import ATP-binding protein PstB 2 (Listeria monocytogenes serovar 1/2a (strain ATCC BAA-679 / EGD-e)).